The following is a 943-amino-acid chain: Isoleucine--tRNA ligase (943 aa).

The 'HIGH' region signature appears at 59–69 (PYANGQIHLGH). Glu-577 serves as a coordination point for L-isoleucyl-5'-AMP. The 'KMSKS' region signature appears at 618-622 (KMSKS). ATP is bound at residue Lys-621. 4 residues coordinate Zn(2+): Cys-906, Cys-909, Cys-926, and Cys-929.

It belongs to the class-I aminoacyl-tRNA synthetase family. IleS type 1 subfamily. In terms of assembly, monomer. Requires Zn(2+) as cofactor.

The protein resides in the cytoplasm. It catalyses the reaction tRNA(Ile) + L-isoleucine + ATP = L-isoleucyl-tRNA(Ile) + AMP + diphosphate. Its function is as follows. Catalyzes the attachment of isoleucine to tRNA(Ile). As IleRS can inadvertently accommodate and process structurally similar amino acids such as valine, to avoid such errors it has two additional distinct tRNA(Ile)-dependent editing activities. One activity is designated as 'pretransfer' editing and involves the hydrolysis of activated Val-AMP. The other activity is designated 'posttransfer' editing and involves deacylation of mischarged Val-tRNA(Ile). In Xanthomonas campestris pv. campestris (strain B100), this protein is Isoleucine--tRNA ligase.